A 122-amino-acid polypeptide reads, in one-letter code: Large ribosomal subunit protein uL14 (122 aa).

It belongs to the universal ribosomal protein uL14 family. In terms of assembly, part of the 50S ribosomal subunit. Forms a cluster with proteins L3 and L19. In the 70S ribosome, L14 and L19 interact and together make contacts with the 16S rRNA in bridges B5 and B8.

Functionally, binds to 23S rRNA. Forms part of two intersubunit bridges in the 70S ribosome. The sequence is that of Large ribosomal subunit protein uL14 from Methylococcus capsulatus (strain ATCC 33009 / NCIMB 11132 / Bath).